The chain runs to 252 residues: ATP synthase subunit a (252 aa).

The next 5 membrane-spanning stretches (helical) occupy residues 33 to 53 (GQVFITTWIVMGILIVAALAA), 92 to 112 (VPFVGTLFLFIFVCNWSGALV), 130 to 150 (DINTTVALALLVSLAYFYAGL), 196 to 216 (LVVGVLVLLVPLFVPLPVMAL), and 217 to 237 (GLFTSAIQALVFATLAATYIG).

The protein belongs to the ATPase A chain family. In terms of assembly, F-type ATPases have 2 components, CF(1) - the catalytic core - and CF(0) - the membrane proton channel. CF(1) has five subunits: alpha(3), beta(3), gamma(1), delta(1), epsilon(1). CF(0) has three main subunits: a(1), b(2) and c(9-12). The alpha and beta chains form an alternating ring which encloses part of the gamma chain. CF(1) is attached to CF(0) by a central stalk formed by the gamma and epsilon chains, while a peripheral stalk is formed by the delta and b chains.

Its subcellular location is the cellular thylakoid membrane. In terms of biological role, key component of the proton channel; it plays a direct role in the translocation of protons across the membrane. The chain is ATP synthase subunit a from Synechococcus sp. (strain PCC 6716).